We begin with the raw amino-acid sequence, 284 residues long: Phosphatidylserine decarboxylase proenzyme (284 aa).

Residues D88, H145, and S248 each act as charge relay system; for autoendoproteolytic cleavage activity in the active site. Residue S248 is the Schiff-base intermediate with substrate; via pyruvic acid; for decarboxylase activity of the active site. Position 248 is a pyruvic acid (Ser); by autocatalysis (S248).

The protein belongs to the phosphatidylserine decarboxylase family. PSD-B subfamily. Prokaryotic type I sub-subfamily. As to quaternary structure, heterodimer of a large membrane-associated beta subunit and a small pyruvoyl-containing alpha subunit. It depends on pyruvate as a cofactor. Is synthesized initially as an inactive proenzyme. Formation of the active enzyme involves a self-maturation process in which the active site pyruvoyl group is generated from an internal serine residue via an autocatalytic post-translational modification. Two non-identical subunits are generated from the proenzyme in this reaction, and the pyruvate is formed at the N-terminus of the alpha chain, which is derived from the carboxyl end of the proenzyme. The autoendoproteolytic cleavage occurs by a canonical serine protease mechanism, in which the side chain hydroxyl group of the serine supplies its oxygen atom to form the C-terminus of the beta chain, while the remainder of the serine residue undergoes an oxidative deamination to produce ammonia and the pyruvoyl prosthetic group on the alpha chain. During this reaction, the Ser that is part of the protease active site of the proenzyme becomes the pyruvoyl prosthetic group, which constitutes an essential element of the active site of the mature decarboxylase.

Its subcellular location is the cell membrane. The catalysed reaction is a 1,2-diacyl-sn-glycero-3-phospho-L-serine + H(+) = a 1,2-diacyl-sn-glycero-3-phosphoethanolamine + CO2. Its pathway is phospholipid metabolism; phosphatidylethanolamine biosynthesis; phosphatidylethanolamine from CDP-diacylglycerol: step 2/2. In terms of biological role, catalyzes the formation of phosphatidylethanolamine (PtdEtn) from phosphatidylserine (PtdSer). The protein is Phosphatidylserine decarboxylase proenzyme of Delftia acidovorans (strain DSM 14801 / SPH-1).